Reading from the N-terminus, the 93-residue chain is Small ribosomal subunit protein uS19 (93 aa).

It belongs to the universal ribosomal protein uS19 family.

In terms of biological role, protein S19 forms a complex with S13 that binds strongly to the 16S ribosomal RNA. The sequence is that of Small ribosomal subunit protein uS19 from Micrococcus luteus (strain ATCC 4698 / DSM 20030 / JCM 1464 / CCM 169 / CCUG 5858 / IAM 1056 / NBRC 3333 / NCIMB 9278 / NCTC 2665 / VKM Ac-2230) (Micrococcus lysodeikticus).